Here is a 3414-residue protein sequence, read N- to C-terminus: Genome polyprotein (3414 aa).

The disordered stretch occupies residues 1 to 27 (MAGKAILKGKGGGPPRRVSKETAKKTR). At 1–98 (MAGKAILKGK…LQKRGKRRST (98 aa)) the chain is on the cytoplasmic side. A propeptide spans 98–116 (TTDWTGWLLVAMLLSIALA) (ER anchor for the capsid protein C, removed in mature form by serine protease NS3). Residues 99 to 119 (TDWTGWLLVAMLLSIALAATV) form a helical membrane-spanning segment. The Extracellular segment spans residues 120–242 (RKEGDGTTVI…HLTRVEGWVW (123 aa)). Asparagine 144 carries N-linked (GlcNAc...) asparagine; by host glycosylation. A helical transmembrane segment spans residues 243–260 (KNKSLTLAVVVIVWMTVE). A topological domain (cytoplasmic) is located at residue serine 261. A helical transmembrane segment spans residues 262-280 (AVTRIVIVSALLCLAPAYA). Topologically, residues 281 to 727 (SRCTHLENRD…HTVLGGAFNS (447 aa)) are extracellular. 6 disulfide bridges follow: cysteine 283-cysteine 310, cysteine 340-cysteine 396, cysteine 340-cysteine 401, cysteine 354-cysteine 385, cysteine 372-cysteine 396, and cysteine 372-cysteine 401. A fusion peptide region spans residues 378–391 (DRGWGNHCGLFGKG). N-linked (GlcNAc...) asparagine; by host glycosylation is present at asparagine 434. Intrachain disulfides connect cysteine 466–cysteine 570 and cysteine 587–cysteine 618. The chain crosses the membrane as a helical span at residues 728-748 (VFGGVGFLPRILLGISLAWLG). The Cytoplasmic segment spans residues 749–755 (LNMRNPT). The chain crosses the membrane as a helical span at residues 756–776 (MSMSFLLAGGLVLTMTLGVGA). Over 777-1132 (DVGCAVDTER…RSMVVADNGE (356 aa)) the chain is Extracellular. Cystine bridges form between cysteine 780–cysteine 791, cysteine 831–cysteine 920, cysteine 955–cysteine 1000, cysteine 1057–cysteine 1106, cysteine 1068–cysteine 1090, and cysteine 1089–cysteine 1093. N-linked (GlcNAc...) asparagine; by host glycans are attached at residues asparagine 861, asparagine 983, and asparagine 999. Residues 1133–1153 (LLSEGGIPGIVAVFVVLEYII) form a helical membrane-spanning segment. Topologically, residues 1154 to 1158 (RKRPS) are cytoplasmic. Residues 1159–1179 (AGLTVVWGGVVVLALLVTGMV) traverse the membrane as a helical segment. Residues 1180-1187 (TLQSMLRY) lie on the Lumenal side of the membrane. The helical transmembrane segment at 1188 to 1208 (VIAVGVTFHLELGPEIVALML) threads the bilayer. At 1209-1236 (LQAVFELRVGLLGAFVLRRSLTTREVVT) the chain is on the cytoplasmic side. A helical transmembrane segment spans residues 1237–1257 (IYFLLLVLELGLPSANLEALW). Over 1258-1293 (GWADALAMGAMIFRACTAEGKTGLGLLLVALMTQQN) the chain is Lumenal. Residues 1294-1314 (AVIVHQGLVIFLSVASACSVW) traverse the membrane as a helical segment. Topologically, residues 1315–1363 (KLLRGQREQKGLSWIVPLAGRLGGKGSGIRLLAFWELASRRDRRSFSEP) are cytoplasmic. The helical transmembrane segment at 1364 to 1381 (LTVVGVMLTLASGMMRHT) threads the bilayer. A topological domain (lumenal) is located at residue serine 1382. A helical transmembrane segment spans residues 1383–1403 (QEALCALAAASFLLLMLVLGT). Topologically, residues 1404–1454 (RKMQLVAEWSGCVEWHPDLADEGGEISLRVRQDALGNFHLTELEKEERMMA) are cytoplasmic. Residues 1410–1449 (AEWSGCVEWHPDLADEGGEISLRVRQDALGNFHLTELEKE) form an interacts with and activates NS3 protease region. Positions 1455 to 1475 (FWLLAGLTASALHWTGILVVM) form an intramembrane region, helical. At 1476 to 2160 (GLWTMSEMLR…KMAERDAPEA (685 aa)) the chain is on the cytoplasmic side. Residues 1490–1669 (SDLVFSGQSG…EVEKSRPNLP (180 aa)) enclose the Peptidase S7 domain. Residues histidine 1543, aspartate 1567, and serine 1627 each act as charge relay system; for serine protease NS3 activity in the active site. Residues 1675–1831 (TGWTSKGTIT…ESNGAITSEE (157 aa)) form the Helicase ATP-binding domain. 1688 to 1695 (MHPGSGKT) contacts ATP. Residues 1779-1782 (DEAH) carry the DEAH box motif. A Helicase C-terminal domain is found at 1841-2000 (DGFDWITEYE…TLRGPVATFY (160 aa)). Lysine 1883 carries the post-translational modification N6-acetyllysine; by host. The chain crosses the membrane as a helical span at residues 2161 to 2181 (FLTMVEMVVLGLATLGAVWCL). Over 2182-2189 (VLRTSISR) the chain is Lumenal. The helical intramembrane region spans 2190–2210 (MMLGTMVLLVSLALLWAGGVG). Residue tyrosine 2211 is a topological domain, lumenal. A helical transmembrane segment spans residues 2212–2232 (GSMAGVALVFYTLLTVLQPEA). The Cytoplasmic portion of the chain corresponds to 2233–2244 (GKQRSSDDNKLA). A helical membrane pass occupies residues 2245–2265 (YFLLTLCSLAGLVAANEMGFL). Residues 2266 to 2299 (EKTKADLSAVLWSEREEPRVWSEWTNIDIQPAKS) lie on the Lumenal side of the membrane. An intramembrane region (helical) is located at residues 2300-2320 (WGTYVLVVSLFTPYIIHQLQT). The Lumenal segment spans residues 2321 to 2343 (RIQQLVNSAVASGAQAMRDLGGG). Positions 2344–2364 (TPFFGVAGHVLTLGVVSLVGA) form an intramembrane region, helical. At 2365–2368 (TPTS) the chain is on the lumenal side. A helical membrane pass occupies residues 2369–2389 (LVVGVGLAAFHLAIVVSGLEA). Residues 2390–2432 (ELTQRAHKVFFSAMVRNPMVDGDVINPFGDGEVKPALYERKMS) are Cytoplasmic-facing. The helical transmembrane segment at 2433 to 2453 (LILAMILCFMSVVLNRTVPAV) threads the bilayer. Residues 2454–2477 (TEASAVGLAAAGQLIRPEADTLWT) lie on the Lumenal side of the membrane. Residues 2478-2498 (MPVACGLSGVVRGSLWGFLPL) traverse the membrane as a helical segment. Topologically, residues 2499–3414 (GHRLWLRTSG…WELKVESSII (916 aa)) are cytoplasmic. Residues 2512-2776 (GGSEGDTLGD…EMDLGVGTRC (265 aa)) enclose the mRNA cap 0-1 NS5-type MT domain. An S-adenosyl-L-methionine-binding site is contributed by serine 2567. Serine 2567 carries the phosphoserine modification. Lysine 2572 functions as the For 2'-O-MTase activity in the catalytic mechanism. S-adenosyl-L-methionine-binding residues include glycine 2597, tryptophan 2598, threonine 2615, isoleucine 2616, and valine 2643. Aspartate 2657 (for 2'-O-MTase activity) is an active-site residue. Isoleucine 2658 provides a ligand contact to S-adenosyl-L-methionine. Residues lysine 2694 and glutamate 2730 each act as for 2'-O-MTase activity in the active site. Residues 2730-2734 (EMYYS) are interaction with host SCRIB. Position 2732 (tyrosine 2732) interacts with S-adenosyl-L-methionine. Glutamate 2950, histidine 2954, cysteine 2959, and cysteine 2962 together coordinate Zn(2+). Residues 3040–3189 (GLFYADDTAG…RPIDDRFSKA (150 aa)) form the RdRp catalytic domain. Residues histidine 3224, cysteine 3240, and cysteine 3359 each contribute to the Zn(2+) site.

It in the N-terminal section; belongs to the class I-like SAM-binding methyltransferase superfamily. mRNA cap 0-1 NS5-type methyltransferase family. As to quaternary structure, homodimer. In terms of assembly, forms heterodimers with envelope protein E in the endoplasmic reticulum and Golgi. Homodimer; in the endoplasmic reticulum and Golgi. As to quaternary structure, forms homodimers as well as homohexamers. NS1 may interact with NS4A. In terms of assembly, forms a heterodimer with serine protease NS3. May form homooligomers. Forms a heterodimer with NS2B. Interacts with NS4B. Interacts with unphosphorylated RNA-directed RNA polymerase NS5; this interaction stimulates RNA-directed RNA polymerase NS5 guanylyltransferase activity. As to quaternary structure, interacts with serine protease NS3. In terms of assembly, interacts with host STAT2; this interaction inhibits the phosphorylation of the latter, and, when all viral proteins are present (polyprotein), targets STAT2 for degradation. In terms of processing, specific enzymatic cleavages in vivo yield mature proteins. Cleavages in the lumen of endoplasmic reticulum are performed by host signal peptidase, whereas cleavages in the cytoplasmic side are performed by serine protease NS3. Signal cleavage at the 2K-4B site requires a prior NS3 protease-mediated cleavage at the 4A-2K site. Post-translationally, cleaved in post-Golgi vesicles by a host furin, releasing the mature small envelope protein M, and peptide pr. This cleavage is incomplete as up to 30% of viral particles still carry uncleaved prM. N-glycosylated. In terms of processing, N-glycosylated. The excreted form is glycosylated and this is required for efficient secretion of the protein from infected cells. Post-translationally, acetylated by host KAT5. Acetylation modulates NS3 RNA-binding and unwinding activities and plays an important positive role for viral replication. Phosphorylated on serines residues. This phosphorylation may trigger NS5 nuclear localization.

Its subcellular location is the virion. The protein localises to the host nucleus. The protein resides in the host cytoplasm. It is found in the host perinuclear region. It localises to the secreted. Its subcellular location is the virion membrane. The protein localises to the host endoplasmic reticulum membrane. The catalysed reaction is Selective hydrolysis of -Xaa-Xaa-|-Yaa- bonds in which each of the Xaa can be either Arg or Lys and Yaa can be either Ser or Ala.. It catalyses the reaction RNA(n) + a ribonucleoside 5'-triphosphate = RNA(n+1) + diphosphate. The enzyme catalyses a ribonucleoside 5'-triphosphate + H2O = a ribonucleoside 5'-diphosphate + phosphate + H(+). It carries out the reaction ATP + H2O = ADP + phosphate + H(+). The catalysed reaction is a 5'-end (5'-triphosphoguanosine)-ribonucleoside in mRNA + S-adenosyl-L-methionine = a 5'-end (N(7)-methyl 5'-triphosphoguanosine)-ribonucleoside in mRNA + S-adenosyl-L-homocysteine. It catalyses the reaction a 5'-end (N(7)-methyl 5'-triphosphoguanosine)-ribonucleoside in mRNA + S-adenosyl-L-methionine = a 5'-end (N(7)-methyl 5'-triphosphoguanosine)-(2'-O-methyl-ribonucleoside) in mRNA + S-adenosyl-L-homocysteine + H(+). In terms of biological role, plays a role in virus budding by binding to the cell membrane and gathering the viral RNA into a nucleocapsid that forms the core of a mature virus particle. During virus entry, may induce genome penetration into the host cytoplasm after hemifusion induced by the surface proteins. Can migrate to the cell nucleus where it modulates host functions. Its function is as follows. Inhibits RNA silencing by interfering with host Dicer. Prevents premature fusion activity of envelope proteins in trans-Golgi by binding to envelope protein E at pH6.0. After virion release in extracellular space, gets dissociated from E dimers. Functionally, acts as a chaperone for envelope protein E during intracellular virion assembly by masking and inactivating envelope protein E fusion peptide. prM is the only viral peptide matured by host furin in the trans-Golgi network probably to avoid catastrophic activation of the viral fusion activity in acidic Golgi compartment prior to virion release. prM-E cleavage is inefficient, and many virions are only partially matured. These uncleaved prM would play a role in immune evasion. In terms of biological role, may play a role in virus budding. Exerts cytotoxic effects by activating a mitochondrial apoptotic pathway through M ectodomain. May display a viroporin activity. Its function is as follows. Binds to host cell surface receptor and mediates fusion between viral and cellular membranes. Envelope protein is synthesized in the endoplasmic reticulum in the form of heterodimer with protein prM. They play a role in virion budding in the ER, and the newly formed immature particle is covered with 60 spikes composed of heterodimer between precursor prM and envelope protein E. The virion is transported to the Golgi apparatus where the low pH causes dissociation of PrM-E heterodimers and formation of E homodimers. prM-E cleavage is inefficient, and many virions are only partially matured. These uncleaved prM would play a role in immune evasion. Involved in immune evasion, pathogenesis and viral replication. Once cleaved off the polyprotein, is targeted to three destinations: the viral replication cycle, the plasma membrane and the extracellular compartment. Essential for viral replication. Required for formation of the replication complex and recruitment of other non-structural proteins to the ER-derived membrane structures. Excreted as a hexameric lipoparticle that plays a role against host immune response. Antagonizing the complement function. Binds to the host macrophages and dendritic cells. Inhibits signal transduction originating from Toll-like receptor 3 (TLR3). Functionally, component of the viral RNA replication complex that functions in virion assembly and antagonizes the host immune response. In terms of biological role, required cofactor for the serine protease function of NS3. May have membrane-destabilizing activity and form viroporins. Its function is as follows. Displays three enzymatic activities: serine protease, NTPase and RNA helicase. NS3 serine protease, in association with NS2B, performs its autocleavage and cleaves the polyprotein at dibasic sites in the cytoplasm: C-prM, NS2A-NS2B, NS2B-NS3, NS3-NS4A, NS4A-2K and NS4B-NS5. NS3 RNA helicase binds RNA and unwinds dsRNA in the 3' to 5' direction. Regulates the ATPase activity of the NS3 helicase activity. NS4A allows NS3 helicase to conserve energy during unwinding. Functionally, functions as a signal peptide for NS4B and is required for the interferon antagonism activity of the latter. In terms of biological role, induces the formation of ER-derived membrane vesicles where the viral replication takes place. Inhibits interferon (IFN)-induced host STAT1 phosphorylation and nuclear translocation, thereby preventing the establishment of cellular antiviral state by blocking the IFN-alpha/beta pathway. Inhibits STAT2 translocation in the nucleus after IFN-alpha treatment. Its function is as follows. Replicates the viral (+) and (-) RNA genome, and performs the capping of genomes in the cytoplasm. NS5 methylates viral RNA cap at guanine N-7 and ribose 2'-O positions. Besides its role in RNA genome replication, also prevents the establishment of cellular antiviral state by blocking the interferon-alpha/beta (IFN-alpha/beta) signaling pathway. Inhibits host TYK2 and STAT2 phosphorylation, thereby preventing activation of JAK-STAT signaling pathway. In Homo sapiens (Human), this protein is Genome polyprotein.